The primary structure comprises 396 residues: Probable circularly permuted 1,3-beta-glucanase YJL171C (396 aa).

The N-terminal stretch at 1-19 (MLQSIVLSVCMFMLHTVAA) is a signal peptide. N-linked (GlcNAc...) asparagine glycosylation is found at Asn-51, Asn-99, Asn-122, Asn-146, Asn-174, Asn-219, and Asn-249. An ExDxxE motif motif is present at residues 259-264 (EYDIFE). Asn-267, Asn-300, Asn-328, and Asn-346 each carry an N-linked (GlcNAc...) asparagine glycan. A lipid anchor (GPI-anchor amidated asparagine) is attached at Asn-368. Positions 369–396 (GVALTKMQNGVWYYILAIFTAFTQVVLI) are cleaved as a propeptide — removed in mature form.

Belongs to the PGA52 family. In terms of processing, extensively N-glycosylated.

The protein resides in the cell membrane. It carries out the reaction Hydrolysis of (1-&gt;3)-beta-D-glucosidic linkages in (1-&gt;3)-beta-D-glucans.. Its function is as follows. Probable circularly permuted 1,3-beta-glucanase involved in cell wall modification through beta-1,3-glucan network alterations such as increased branching or remodeling. The sequence is that of Probable circularly permuted 1,3-beta-glucanase YJL171C (TOH1) from Saccharomyces cerevisiae (strain ATCC 204508 / S288c) (Baker's yeast).